Here is a 71-residue protein sequence, read N- to C-terminus: UPF0346 protein BCE_2336 (71 aa).

Belongs to the UPF0346 family.

In Bacillus cereus (strain ATCC 10987 / NRS 248), this protein is UPF0346 protein BCE_2336.